We begin with the raw amino-acid sequence, 970 residues long: Longitudinals lacking protein, isoforms F/I/K/T (970 aa).

Residues Val32–Gln97 enclose the BTB domain. Disordered stretches follow at residues Leu115–Leu200, Ser228–Ser340, Asp447–Gln468, and Gln790–Asp843. 4 stretches are compositionally biased toward low complexity: residues Ser162 to Pro175, Ser228 to Thr251, Thr263 to Ser293, and Asn329 to Ser340. 2 stretches are compositionally biased toward polar residues: residues Asp447–Ser456 and Gln808–Val818. The span at Gln819 to Asp828 shows a compositional bias: low complexity. Residues Tyr903 to Glu925 form a C2H2-type 1; degenerate zinc finger. The segment at His933–His955 adopts a C2H2-type 2 zinc-finger fold.

In terms of tissue distribution, by stage 11, isoform F is expressed throughout the mesoderm whereas isoform T, and at low levels isoform I, is expressed throughout the ectoderm. Isoform K is expressed in both mesoderm and ectoderm. Expression becomes restricted during later stages; starting from stage 14 to 15, isoform F is expressed in the gut. Isoform I is expressed in the CNS. Isoform I and isoform F show expression in the epithelium starting at stage 14, though for isoform I the CNS expression remains predominant. Expression is also seen in specific types of cells in the embryo; isoform K is expressed in the ventral furrow at stage 5 and in a dynamic pattern in the ventral neurogenic region starting at stage 7. Isoform T is expressed around the tracheal pits at stage 11. Isoform F shows transient enrichment in a dorsal cell layer in the CNS at stages 13 and 14.

The protein resides in the nucleus. Functionally, putative transcription factor required for axon growth and guidance in the central and peripheral nervous systems. Repels CNS axons away from the midline by promoting the expression of the midline repellent sli and its receptor robo. In Drosophila melanogaster (Fruit fly), this protein is Longitudinals lacking protein, isoforms F/I/K/T.